The primary structure comprises 467 residues: GTPase Der (467 aa).

EngA-type G domains follow at residues 25 to 188 (PVVA…PEAP) and 199 to 372 (RRVA…ASWE). GTP is bound by residues 31 to 38 (GRPNVGKS), 78 to 82 (DTGGW), 140 to 143 (NKAD), 205 to 212 (GRPNVGKS), 252 to 256 (DTAGL), and 317 to 320 (NKWD). In terms of domain architecture, KH-like spans 373–455 (TRVPTAQLNA…PIEISVRARK (83 aa)).

This sequence belongs to the TRAFAC class TrmE-Era-EngA-EngB-Septin-like GTPase superfamily. EngA (Der) GTPase family. As to quaternary structure, associates with the 50S ribosomal subunit.

GTPase that plays an essential role in the late steps of ribosome biogenesis. This is GTPase Der from Salinispora tropica (strain ATCC BAA-916 / DSM 44818 / JCM 13857 / NBRC 105044 / CNB-440).